A 634-amino-acid polypeptide reads, in one-letter code: UPF0329 protein ECU07_1850/ECU10_0050 (634 aa).

Composition is skewed to basic and acidic residues over residues 354-365 (REEREKREESKG) and 397-407 (GESKEEDRGEE). Residues 354–438 (REEREKREES…KGSGEKRISE (85 aa)) are disordered. A compositionally biased stretch (acidic residues) spans 408–417 (GGVEAEDPLE).

The protein belongs to the UPF0329 family.

The sequence is that of UPF0329 protein ECU07_1850/ECU10_0050 from Encephalitozoon cuniculi (strain GB-M1) (Microsporidian parasite).